A 257-amino-acid polypeptide reads, in one-letter code: Nickel import system ATP-binding protein NikD (257 aa).

Positions 4–245 (IDIQNLTIKN…HLHPYTERLI (242 aa)) constitute an ABC transporter domain. 37-44 (GESGAGKS) serves as a coordination point for ATP.

Belongs to the ABC transporter superfamily. In terms of assembly, the complex is composed of two ATP-binding proteins (NikD and NikE), two transmembrane proteins (NikB and NikC) and a solute-binding protein (NikA).

It localises to the cell membrane. It catalyses the reaction Ni(2+)(out) + ATP + H2O = Ni(2+)(in) + ADP + phosphate + H(+). Functionally, part of the ABC transporter complex NikABCDE (Opp2) involved in nickel import. Probably responsible for energy coupling to the transport system. The protein is Nickel import system ATP-binding protein NikD of Staphylococcus aureus (strain Mu50 / ATCC 700699).